The sequence spans 518 residues: GMP synthase [glutamine-hydrolyzing] (518 aa).

The Glutamine amidotransferase type-1 domain occupies 8–201 (TVLIIDFGSQ…VLKISNLKGN (194 aa)). Cysteine 85 acts as the Nucleophile in catalysis. Catalysis depends on residues histidine 175 and glutamate 177. The GMPS ATP-PPase domain maps to 202-393 (WSMASYREQT…LGLPEQFIGR (192 aa)). 229–235 (SGGVDSS) serves as a coordination point for ATP.

As to quaternary structure, homodimer.

It catalyses the reaction XMP + L-glutamine + ATP + H2O = GMP + L-glutamate + AMP + diphosphate + 2 H(+). It functions in the pathway purine metabolism; GMP biosynthesis; GMP from XMP (L-Gln route): step 1/1. Functionally, catalyzes the synthesis of GMP from XMP. The protein is GMP synthase [glutamine-hydrolyzing] of Bartonella henselae (strain ATCC 49882 / DSM 28221 / CCUG 30454 / Houston 1) (Rochalimaea henselae).